Consider the following 101-residue polypeptide: Interleukin-8 (101 aa).

An N-terminal signal peptide occupies residues 1-22 (MTSKLAVALLAAFLLSAALCEA). R27 is modified (citrulline). 2 cysteine pairs are disulfide-bonded: C34/C61 and C36/C77.

The protein belongs to the intercrine alpha (chemokine CxC) family. In terms of assembly, homodimer. Interacts with TNFAIP6 (via Link domain); this interaction interferes with chemokine binding to glycosaminoglycans. Post-translationally, citrullination at Arg-27 prevents proteolysis, and dampens tissue inflammation, it also enhances leukocytosis, possibly through impaired chemokine clearance from the blood circulation.

It localises to the secreted. In terms of biological role, chemotactic factor that mediates inflammatory response by attracting neutrophils, basophils, and T-cells to clear pathogens and protect the host from infection. Also plays an important role in neutrophil activation. Released in response to an inflammatory stimulus, exerts its effect by binding to the G-protein-coupled receptors CXCR1 and CXCR2, primarily found in neutrophils, monocytes and endothelial cells. G-protein heterotrimer (alpha, beta, gamma subunits) constitutively binds to CXCR1/CXCR2 receptor and activation by IL8 leads to beta and gamma subunits release from Galpha (GNAI2 in neutrophils) and activation of several downstream signaling pathways including PI3K and MAPK pathways. The polypeptide is Interleukin-8 (CXCL8) (Ovis aries (Sheep)).